The primary structure comprises 239 residues: Purine nucleoside phosphorylase DeoD-type (239 aa).

Histidine 5 provides a ligand contact to a purine D-ribonucleoside. Residues glycine 21, arginine 25, arginine 44, and 88–91 (RIGS) each bind phosphate. Residues 180–182 (EME) and 204–205 (TD) contribute to the a purine D-ribonucleoside site. Aspartate 205 (proton donor) is an active-site residue.

The protein belongs to the PNP/UDP phosphorylase family. In terms of assembly, homohexamer; trimer of homodimers.

It catalyses the reaction a purine D-ribonucleoside + phosphate = a purine nucleobase + alpha-D-ribose 1-phosphate. The catalysed reaction is a purine 2'-deoxy-D-ribonucleoside + phosphate = a purine nucleobase + 2-deoxy-alpha-D-ribose 1-phosphate. Functionally, catalyzes the reversible phosphorolytic breakdown of the N-glycosidic bond in the beta-(deoxy)ribonucleoside molecules, with the formation of the corresponding free purine bases and pentose-1-phosphate. In Aliivibrio fischeri (strain ATCC 700601 / ES114) (Vibrio fischeri), this protein is Purine nucleoside phosphorylase DeoD-type.